Consider the following 663-residue polypeptide: Bifunctional polymyxin resistance protein ArnA (663 aa).

Positions 1 to 307 (MSPKAVVFAY…EFGLVEGSQL (307 aa)) are formyltransferase ArnAFT. The active-site Proton donor; for formyltransferase activity is the H106. Residues R116 and 138–142 (VKRAD) contribute to the (6R)-10-formyltetrahydrofolate site. A dehydrogenase ArnADH region spans residues 317 to 663 (RRTRVLILGV…EAMAEKADMR (347 aa)). NAD(+)-binding positions include D350 and 371–372 (DI). UDP-alpha-D-glucuronate contacts are provided by residues A396, Y401, and 435–436 (TS). The active-site Proton acceptor; for decarboxylase activity is the E437. UDP-alpha-D-glucuronate contacts are provided by residues R463, N494, 528 to 537 (RLVDGGAQKR), and Y615. The active-site Proton donor; for decarboxylase activity is R621.

This sequence in the N-terminal section; belongs to the Fmt family. UDP-L-Ara4N formyltransferase subfamily. It in the C-terminal section; belongs to the NAD(P)-dependent epimerase/dehydratase family. UDP-glucuronic acid decarboxylase subfamily. Homohexamer, formed by a dimer of trimers.

It carries out the reaction UDP-alpha-D-glucuronate + NAD(+) = UDP-beta-L-threo-pentopyranos-4-ulose + CO2 + NADH. The catalysed reaction is UDP-4-amino-4-deoxy-beta-L-arabinose + (6R)-10-formyltetrahydrofolate = UDP-4-deoxy-4-formamido-beta-L-arabinose + (6S)-5,6,7,8-tetrahydrofolate + H(+). The protein operates within nucleotide-sugar biosynthesis; UDP-4-deoxy-4-formamido-beta-L-arabinose biosynthesis; UDP-4-deoxy-4-formamido-beta-L-arabinose from UDP-alpha-D-glucuronate: step 1/3. It participates in nucleotide-sugar biosynthesis; UDP-4-deoxy-4-formamido-beta-L-arabinose biosynthesis; UDP-4-deoxy-4-formamido-beta-L-arabinose from UDP-alpha-D-glucuronate: step 3/3. It functions in the pathway bacterial outer membrane biogenesis; lipopolysaccharide biosynthesis. In terms of biological role, bifunctional enzyme that catalyzes the oxidative decarboxylation of UDP-glucuronic acid (UDP-GlcUA) to UDP-4-keto-arabinose (UDP-Ara4O) and the addition of a formyl group to UDP-4-amino-4-deoxy-L-arabinose (UDP-L-Ara4N) to form UDP-L-4-formamido-arabinose (UDP-L-Ara4FN). The modified arabinose is attached to lipid A and is required for resistance to polymyxin and cationic antimicrobial peptides. The chain is Bifunctional polymyxin resistance protein ArnA from Pseudomonas savastanoi pv. phaseolicola (strain 1448A / Race 6) (Pseudomonas syringae pv. phaseolicola (strain 1448A / Race 6)).